Reading from the N-terminus, the 438-residue chain is sn-glycerol-3-phosphate-binding periplasmic protein UgpB (438 aa).

The first 23 residues, 1–23 (MKPLHYTASALALGLALMGNAQA), serve as a signal peptide directing secretion. Sn-glycerol 3-phosphate is bound by residues Tyr65, Glu89, Ser144, Ser270, Gly307, Tyr346, and Arg397.

This sequence belongs to the bacterial solute-binding protein 1 family. The complex is composed of two ATP-binding proteins (UgpC), two transmembrane proteins (UgpA and UgpE) and a solute-binding protein (UgpB).

The protein localises to the periplasm. Functionally, part of the ABC transporter complex UgpBAEC involved in sn-glycerol-3-phosphate (G3P) import. Binds G3P. The sequence is that of sn-glycerol-3-phosphate-binding periplasmic protein UgpB (ugpB) from Shigella flexneri.